The chain runs to 460 residues: tRNA (guanine(37)-N(1))-methyltransferase (460 aa).

Residues H204, 243-244 (DL), 271-272 (DA), and N292 contribute to the S-adenosyl-L-methionine site. Residues 390–428 (ASTTTTPTTSNTNTSTTTSTTSTSTTTTESTNTNNSANN) show a composition bias toward low complexity. Residues 390 to 460 (ASTTTTPTTS…SIDTNKKLKN (71 aa)) form a disordered region. The segment covering 442 to 451 (DSNETNETDS) has biased composition (acidic residues).

It belongs to the class I-like SAM-binding methyltransferase superfamily. TRM5/TYW2 family. As to quaternary structure, monomer.

The protein resides in the mitochondrion matrix. It is found in the nucleus. Its subcellular location is the cytoplasm. It catalyses the reaction guanosine(37) in tRNA + S-adenosyl-L-methionine = N(1)-methylguanosine(37) in tRNA + S-adenosyl-L-homocysteine + H(+). Its function is as follows. Specifically methylates the N1 position of guanosine-37 in various cytoplasmic and mitochondrial tRNAs. Methylation is not dependent on the nature of the nucleoside 5' of the target nucleoside. This is the first step in the biosynthesis of wybutosine (yW), a modified base adjacent to the anticodon of tRNAs and required for accurate decoding. The sequence is that of tRNA (guanine(37)-N(1))-methyltransferase (trmt5) from Dictyostelium discoideum (Social amoeba).